Here is a 378-residue protein sequence, read N- to C-terminus: Succinyl-diaminopimelate desuccinylase (378 aa).

His-67 contacts Zn(2+). Asp-69 is a catalytic residue. Position 100 (Asp-100) interacts with Zn(2+). Residue Glu-134 is the Proton acceptor of the active site. Zn(2+) contacts are provided by Glu-135, Glu-163, and His-349.

It belongs to the peptidase M20A family. DapE subfamily. As to quaternary structure, homodimer. The cofactor is Zn(2+). Requires Co(2+) as cofactor.

It catalyses the reaction N-succinyl-(2S,6S)-2,6-diaminopimelate + H2O = (2S,6S)-2,6-diaminopimelate + succinate. It functions in the pathway amino-acid biosynthesis; L-lysine biosynthesis via DAP pathway; LL-2,6-diaminopimelate from (S)-tetrahydrodipicolinate (succinylase route): step 3/3. Catalyzes the hydrolysis of N-succinyl-L,L-diaminopimelic acid (SDAP), forming succinate and LL-2,6-diaminopimelate (DAP), an intermediate involved in the bacterial biosynthesis of lysine and meso-diaminopimelic acid, an essential component of bacterial cell walls. This chain is Succinyl-diaminopimelate desuccinylase, found in Nitrosospira multiformis (strain ATCC 25196 / NCIMB 11849 / C 71).